Here is a 343-residue protein sequence, read N- to C-terminus: Melanoma-associated antigen B18 (343 aa).

Residues 1–17 (MPRGQKSKLRAREKRHQ) show a composition bias toward basic residues. The disordered stretch occupies residues 1–102 (MPRGQKSKLR…LGSSREAEGW (102 aa)). Positions 67-87 (APSTTNAIAPVSCSSNEGASS) are enriched in polar residues. The segment covering 88-102 (QDEKSLGSSREAEGW) has biased composition (basic and acidic residues). Positions 100–343 (EGWKEDPLNK…TTSSSFSHAK (244 aa)) are interaction with LNX1. Residues 107 to 306 (LNKKVVSLVH…SAFPSCYEEA (200 aa)) enclose the MAGE domain. The segment at 313–343 (RTQARAAARAHTAAMANARSRTTSSSFSHAK) is disordered. The span at 316–333 (ARAAARAHTAAMANARSR) shows a compositional bias: low complexity. Positions 334–343 (TTSSSFSHAK) are enriched in polar residues.

As to quaternary structure, interacts with LNX1.

The protein resides in the cytoplasm. Its function is as follows. May enhance ubiquitin ligase activity of RING-type zinc finger-containing E3 ubiquitin-protein ligases. Proposed to act through recruitment and/or stabilization of the Ubl-conjugating enzyme (E2) at the E3:substrate complex. The sequence is that of Melanoma-associated antigen B18 (MAGEB18) from Homo sapiens (Human).